The primary structure comprises 304 residues: UDP-3-O-acyl-N-acetylglucosamine deacetylase (304 aa).

The Zn(2+) site is built by His-78, His-237, and Asp-241. The active-site Proton donor is His-264.

Belongs to the LpxC family. Zn(2+) is required as a cofactor.

The catalysed reaction is a UDP-3-O-[(3R)-3-hydroxyacyl]-N-acetyl-alpha-D-glucosamine + H2O = a UDP-3-O-[(3R)-3-hydroxyacyl]-alpha-D-glucosamine + acetate. It participates in glycolipid biosynthesis; lipid IV(A) biosynthesis; lipid IV(A) from (3R)-3-hydroxytetradecanoyl-[acyl-carrier-protein] and UDP-N-acetyl-alpha-D-glucosamine: step 2/6. Catalyzes the hydrolysis of UDP-3-O-myristoyl-N-acetylglucosamine to form UDP-3-O-myristoylglucosamine and acetate, the committed step in lipid A biosynthesis. The protein is UDP-3-O-acyl-N-acetylglucosamine deacetylase of Thioalkalivibrio sulfidiphilus (strain HL-EbGR7).